The sequence spans 411 residues: D-galactonate dehydratase family member SBI_01856 (411 aa).

Residues Asn45 and His130 each contribute to the substrate site. Residue Tyr167 is the Proton donor/acceptor of the active site. Position 219 (Asp219) interacts with Mg(2+). His221 acts as the Proton donor/acceptor in catalysis. 2 residues coordinate Mg(2+): Glu245 and Glu271. Residues Glu271, Arg292, His321, Asp325, and Glu348 each contribute to the substrate site.

This sequence belongs to the mandelate racemase/muconate lactonizing enzyme family. GalD subfamily. The cofactor is Mg(2+).

It carries out the reaction D-gluconate = 2-dehydro-3-deoxy-D-gluconate + H2O. Has low D-gluconate dehydratase activity (in vitro), suggesting that it has no significant role in D-gluconate degradation in vivo. Has no detectable activity with a panel of 70 other acid sugars (in vitro). In Streptomyces bingchenggensis (strain BCW-1), this protein is D-galactonate dehydratase family member SBI_01856.